Here is a 138-residue protein sequence, read N- to C-terminus: Small ribosomal subunit protein uS11c (138 aa).

Positions 1–22 are disordered; it reads MTKPIPRIGSRRSGRIGSRKAG. The span at 9–22 shows a compositional bias: basic residues; that stretch reads GSRRSGRIGSRKAG.

This sequence belongs to the universal ribosomal protein uS11 family. As to quaternary structure, part of the 30S ribosomal subunit.

It localises to the plastid. Its subcellular location is the chloroplast. This chain is Small ribosomal subunit protein uS11c, found in Piper cenocladum (Ant piper).